A 587-amino-acid polypeptide reads, in one-letter code: A-type ATP synthase subunit A (587 aa).

234 to 241 contributes to the ATP binding site; sequence GPFGSGKT.

It belongs to the ATPase alpha/beta chains family. As to quaternary structure, the N-terminus (approximately residues 106-122) interacts with subunit H. Has multiple subunits with at least A(3), B(3), C, D, E(1 or 2), F, H(2), I and proteolipid K(x).

It localises to the cell membrane. It catalyses the reaction ATP + H2O + 4 H(+)(in) = ADP + phosphate + 5 H(+)(out). ATP hydrolysis is inhibited by N',N'-dicyclohexylcarbodiimide. Component of the A-type ATP synthase that produces ATP from ADP in the presence of a proton gradient across the membrane. The A chain is the catalytic subunit. Hydrolyzes ATP, GTP (86% of ATPase rate) and UTP (54% of ATPase rate), has very poor activity on CTP. The polypeptide is A-type ATP synthase subunit A (Methanocaldococcus jannaschii (strain ATCC 43067 / DSM 2661 / JAL-1 / JCM 10045 / NBRC 100440) (Methanococcus jannaschii)).